Reading from the N-terminus, the 110-residue chain is UPF0102 protein Abu_0255 (110 aa).

This sequence belongs to the UPF0102 family.

The protein is UPF0102 protein Abu_0255 of Aliarcobacter butzleri (strain RM4018) (Arcobacter butzleri).